Consider the following 128-residue polypeptide: Cytochrome c-type biogenesis protein CcmE (128 aa).

Topologically, residues 1 to 7 (MKKKHKR) are cytoplasmic. A helical; Signal-anchor for type II membrane protein membrane pass occupies residues 8 to 28 (LLVASGIFFFLNCIVFFILTI). The Extracellular segment spans residues 29-128 (LRENISFFYT…KHDENYMPRK (100 aa)). Residues histidine 120 and tyrosine 124 each contribute to the heme site.

The protein belongs to the CcmE/CycJ family.

It localises to the cell membrane. Heme chaperone required for the biogenesis of c-type cytochromes. Transiently binds heme delivered by CcmC and transfers the heme to apo-cytochromes in a process facilitated by CcmF and CcmH. In Wolbachia sp. subsp. Brugia malayi (strain TRS), this protein is Cytochrome c-type biogenesis protein CcmE.